A 413-amino-acid chain; its full sequence is MDIEIIAIGDELTSGRILNTTSSFAAKQLFEAGYEIYGMSTIGDTPEVIGEALKRSIERVDAVLVTGGLGSTDDDLTNEAVSRAFGLPTLPNLEILSIVRAHFAQITDAPVGQLEKLAWLPEGAEVFDPQSGMAGYQLIYEDKPIFFLPGVPHQMKALMVEHVLPRLATWHTHRHVSTFQRVFRIFNLPENEVNTRVSRLKLTNDVHIGYYPVFPEVHLSLLIRDTNPKTAKRLFDSSCRAIKTALGDHIYGYDRDTMSQIVGQALVKRGMTLAVAESCTGGLIAQKLTDMPGSSRYFLGGVTSYHNSMKTAFLDVPERLIEKEGAVSPEVAEAMAYGILEKTGADVTLSVTGIAGPGGGTLEKPVGTVYIAASTPHGDWVNAFQFKGSREQIRELSAQHSLDILRRYLLQDI.

The protein belongs to the CinA family.

This is CinA-like protein from Desulfotalea psychrophila (strain LSv54 / DSM 12343).